The chain runs to 289 residues: 4-hydroxy-tetrahydrodipicolinate synthase (289 aa).

Thr-43 serves as a coordination point for pyruvate. Catalysis depends on Tyr-131, which acts as the Proton donor/acceptor. Lys-160 acts as the Schiff-base intermediate with substrate in catalysis. Ile-200 provides a ligand contact to pyruvate.

The protein belongs to the DapA family. As to quaternary structure, homotetramer; dimer of dimers.

It is found in the cytoplasm. The enzyme catalyses L-aspartate 4-semialdehyde + pyruvate = (2S,4S)-4-hydroxy-2,3,4,5-tetrahydrodipicolinate + H2O + H(+). Its pathway is amino-acid biosynthesis; L-lysine biosynthesis via DAP pathway; (S)-tetrahydrodipicolinate from L-aspartate: step 3/4. Functionally, catalyzes the condensation of (S)-aspartate-beta-semialdehyde [(S)-ASA] and pyruvate to 4-hydroxy-tetrahydrodipicolinate (HTPA). The sequence is that of 4-hydroxy-tetrahydrodipicolinate synthase from Methanococcus vannielii (strain ATCC 35089 / DSM 1224 / JCM 13029 / OCM 148 / SB).